Reading from the N-terminus, the 236-residue chain is 1-(5-phosphoribosyl)-5-[(5-phosphoribosylamino)methylideneamino] imidazole-4-carboxamide isomerase (236 aa).

D8 acts as the Proton acceptor in catalysis. The Proton donor role is filled by D129.

Belongs to the HisA/HisF family.

It is found in the cytoplasm. It catalyses the reaction 1-(5-phospho-beta-D-ribosyl)-5-[(5-phospho-beta-D-ribosylamino)methylideneamino]imidazole-4-carboxamide = 5-[(5-phospho-1-deoxy-D-ribulos-1-ylimino)methylamino]-1-(5-phospho-beta-D-ribosyl)imidazole-4-carboxamide. It participates in amino-acid biosynthesis; L-histidine biosynthesis; L-histidine from 5-phospho-alpha-D-ribose 1-diphosphate: step 4/9. The polypeptide is 1-(5-phosphoribosyl)-5-[(5-phosphoribosylamino)methylideneamino] imidazole-4-carboxamide isomerase (Methanocorpusculum labreanum (strain ATCC 43576 / DSM 4855 / Z)).